We begin with the raw amino-acid sequence, 243 residues long: Vesicle-associated membrane protein-associated protein B/C (243 aa).

N-acetylalanine is present on Ala-2. Over 2-222 (AKVEQVLSLE…PTGKEEGLST (221 aa)) the chain is Cytoplasmic. Residues 7–124 (VLSLEPQHEL…MDSKLRCVFE (118 aa)) form the MSP domain. Ser-146 is modified (phosphoserine). A Glycyl lysine isopeptide (Lys-Gly) (interchain with G-Cter in SUMO1) cross-link involves residue Lys-147. Residue Thr-150 is modified to Phosphothreonine. Phosphoserine occurs at positions 156, 158, 159, 160, and 206. Residues 159–196 (SSLDDTEVKKVMEECKRLQGEVQRLREENKQFKEEDGL) are a coiled coil. A helical; Anchor for type IV membrane protein transmembrane segment spans residues 223-243 (RLLALVVLFFIVGVIIGKIAL).

It belongs to the VAMP-associated protein (VAP) (TC 9.B.17) family. In terms of assembly, homodimer, and heterodimer with VAPA. Interacts with VAMP1 and VAMP2. Interacts (via MSP domain) with ZFYVE27. Interacts with RMDN3. Interacts with KIF5A in a ZFYVE27-dependent manner. Interacts (via MSP domain) with STARD3 (via phospho-FFAT motif). Interacts with STARD3NL (via FFAT motif). Interacts with CERT1. Interacts with PLEKHA3 and SACM1L to form a ternary complex. Interacts with VPS13A (via FFAT motif). Interacts with RB1CC1 (via phosphorylated FFAT motif), MIGA2 (via phosphorylated FFAT motif), RMDN3 (via phosphorylated FFAT motif), OSBPL1A (via FFAT motif), KCNB1 (via phosphorylated FFAT motif) and KCNB2 (via phosphorylated FFAT motif). Interacts (via MSP domain) with WDR44 (via FFAT motif); the interactions connect the endoplasmic reticulum (ER) with the endosomal tubule. (Microbial infection) Interacts (via MSP domain) with hepatitis C virus (HCV) non-structural protein 5A (via disordered domain D3). Interacts with HCV RNA-directed RNA polymerase. As to expression, ubiquitous. Isoform 1 predominates.

The protein resides in the endoplasmic reticulum membrane. Endoplasmic reticulum (ER)-anchored protein that mediates the formation of contact sites between the ER and endosomes via interaction with FFAT motif-containing proteins such as STARD3 or WDR44. Interacts with STARD3 in a FFAT motif phosphorylation dependent manner. Via interaction with WDR44 participates in neosynthesized protein export. Participates in the endoplasmic reticulum unfolded protein response (UPR) by inducing ERN1/IRE1 activity. Involved in cellular calcium homeostasis regulation. The polypeptide is Vesicle-associated membrane protein-associated protein B/C (Homo sapiens (Human)).